The sequence spans 102 residues: MNNAHEENISSVTGFKSTSGSPAIGSSLPGRSGEGRSSSSSSGSTALLAVVNSTLKAIFSNTLDSIFHMVCTDSDKRLSSEFHCLQSMFNLQLFVNLGCPLS.

Positions 1–43 (MNNAHEENISSVTGFKSTSGSPAIGSSLPGRSGEGRSSSSSSG) are disordered. Residues 9-21 (ISSVTGFKSTSGS) show a composition bias toward polar residues. Residues 25–43 (GSSLPGRSGEGRSSSSSSG) are compositionally biased toward low complexity.

This is an uncharacterized protein from Saccharomyces cerevisiae (strain ATCC 204508 / S288c) (Baker's yeast).